The chain runs to 625 residues: Glucose dehydrogenase [FAD, quinone] (625 aa).

A signal peptide spans 1–42 (MSASASACDCLVGVPTGPTLASTCGGSAFMLFMGLLEVFIRS). Position 66–95 (66–95 (DFIVIGGGSAGSVVASRLSEVPQWKVLLIE)) interacts with FAD. Histidine 544 acts as the Proton acceptor in catalysis. Position 613 (selenocysteine 613) is a non-standard amino acid, selenocysteine.

The protein belongs to the GMC oxidoreductase family. It depends on FAD as a cofactor.

The protein localises to the secreted. The catalysed reaction is a quinone + D-glucose = D-glucono-1,5-lactone + a quinol. Its function is as follows. Essential for cuticular modification during development. In Drosophila melanogaster (Fruit fly), this protein is Glucose dehydrogenase [FAD, quinone] (Gld).